The sequence spans 271 residues: Thiazole synthase (271 aa).

Lys95 serves as the catalytic Schiff-base intermediate with DXP. 1-deoxy-D-xylulose 5-phosphate contacts are provided by residues Gly156, 182-183, and 204-205; these read AG and NT.

The protein belongs to the ThiG family. In terms of assembly, homotetramer. Forms heterodimers with either ThiH or ThiS.

The protein localises to the cytoplasm. The enzyme catalyses [ThiS sulfur-carrier protein]-C-terminal-Gly-aminoethanethioate + 2-iminoacetate + 1-deoxy-D-xylulose 5-phosphate = [ThiS sulfur-carrier protein]-C-terminal Gly-Gly + 2-[(2R,5Z)-2-carboxy-4-methylthiazol-5(2H)-ylidene]ethyl phosphate + 2 H2O + H(+). It functions in the pathway cofactor biosynthesis; thiamine diphosphate biosynthesis. In terms of biological role, catalyzes the rearrangement of 1-deoxy-D-xylulose 5-phosphate (DXP) to produce the thiazole phosphate moiety of thiamine. Sulfur is provided by the thiocarboxylate moiety of the carrier protein ThiS. In vitro, sulfur can be provided by H(2)S. The sequence is that of Thiazole synthase from Yersinia pseudotuberculosis serotype O:3 (strain YPIII).